The sequence spans 370 residues: Probable butyrate kinase (370 aa).

Belongs to the acetokinase family.

It is found in the cytoplasm. The catalysed reaction is butanoate + ATP = butanoyl phosphate + ADP. This chain is Probable butyrate kinase, found in Elusimicrobium minutum (strain Pei191).